The chain runs to 367 residues: Probable butyrate kinase (367 aa).

The protein belongs to the acetokinase family.

It localises to the cytoplasm. The enzyme catalyses butanoate + ATP = butanoyl phosphate + ADP. The protein is Probable butyrate kinase of Bacillus cereus (strain G9842).